The sequence spans 1150 residues: Pesticidal crystal protein Cry9Ea (1150 aa).

This sequence belongs to the delta endotoxin family.

Its function is as follows. Promotes colloidosmotic lysis by binding to the midgut epithelial cells of insects. In Bacillus thuringiensis subsp. aizawai, this protein is Pesticidal crystal protein Cry9Ea (cry9Ea).